The primary structure comprises 615 residues: ATP-dependent zinc metalloprotease FtsH (615 aa).

Over 1–8 (MAMNKDKP) the chain is Cytoplasmic. Residues 9-29 (WTLYLLAVGLAVLAAVQFGLF) traverse the membrane as a helical segment. At 30-104 (SQPAVQAIPY…FSGVVEDNTV (75 aa)) the chain is on the periplasmic side. The chain crosses the membrane as a helical span at residues 105 to 125 (ATVMGALMPLLMLLALWYFLF). Residues 126–615 (HGLGQKQGLG…ATYVLVDATK (490 aa)) lie on the Cytoplasmic side of the membrane. An ATP-binding site is contributed by 198–205 (GPPGTGKT). A Zn(2+)-binding site is contributed by His-420. Glu-421 is an active-site residue. Zn(2+) is bound by residues His-424 and Asp-497.

In the central section; belongs to the AAA ATPase family. It in the C-terminal section; belongs to the peptidase M41 family. In terms of assembly, homohexamer. Requires Zn(2+) as cofactor.

The protein resides in the cell inner membrane. Its function is as follows. Acts as a processive, ATP-dependent zinc metallopeptidase for both cytoplasmic and membrane proteins. Plays a role in the quality control of integral membrane proteins. This Pseudomonas putida (strain ATCC 700007 / DSM 6899 / JCM 31910 / BCRC 17059 / LMG 24140 / F1) protein is ATP-dependent zinc metalloprotease FtsH.